We begin with the raw amino-acid sequence, 252 residues long: Small ribosomal subunit protein uS3 (252 aa).

The 71-residue stretch at 39–109 (IRNYVQTRLK…EVKIDVVEVV (71 aa)) folds into the KH type-2 domain. Residues 221–241 (EMKRIKERRSDSGPRSRNDRS) are compositionally biased toward basic and acidic residues. Residues 221-252 (EMKRIKERRSDSGPRSRNDRSQKRRRRPNDRG) are disordered. The span at 242–252 (QKRRRRPNDRG) shows a compositional bias: basic residues.

This sequence belongs to the universal ribosomal protein uS3 family. Part of the 30S ribosomal subunit. Forms a tight complex with proteins S10 and S14.

Functionally, binds the lower part of the 30S subunit head. Binds mRNA in the 70S ribosome, positioning it for translation. This is Small ribosomal subunit protein uS3 from Chlorobium luteolum (strain DSM 273 / BCRC 81028 / 2530) (Pelodictyon luteolum).